The following is an 889-amino-acid chain: Cytoplasmic aconitate hydratase (889 aa).

Substrate is bound by residues Gln-86 and 205 to 207 (DSH). Residues Cys-437, Cys-503, and Cys-506 each coordinate [4Fe-4S] cluster. Substrate contacts are provided by Arg-536 and Arg-541. Thr-628 carries the phosphothreonine modification. Residues Arg-699 and 779-780 (SR) each bind substrate.

The protein belongs to the aconitase/IPM isomerase family. In terms of assembly, interacts (when associated with the 4Fe-4S) with FBXL5. Interacts with frataxin(81-210). The cofactor is [4Fe-4S] cluster.

It is found in the cytoplasm. It localises to the cytosol. It carries out the reaction citrate = D-threo-isocitrate. Functionally, bifunctional iron sensor that switches between 2 activities depending on iron availability. Iron deprivation, promotes its mRNA binding activity through which it regulates the expression of genes involved in iron uptake, sequestration and utilization. Binds to iron-responsive elements (IRES) in the untranslated region of target mRNAs preventing for instance the translation of ferritin and aminolevulinic acid synthase and stabilizing the transferrin receptor mRNA. Its function is as follows. Conversely, when cellular iron levels are high, binds a 4Fe-4S cluster which precludes RNA binding activity and promotes the aconitase activity, the isomerization of citrate to isocitrate via cis-aconitate. The polypeptide is Cytoplasmic aconitate hydratase (ACO1) (Homo sapiens (Human)).